A 436-amino-acid chain; its full sequence is 3-ketoacyl-CoA thiolase (436 aa).

Residue C99 is the Acyl-thioester intermediate of the active site. Catalysis depends on proton acceptor residues H392 and C422.

This sequence belongs to the thiolase-like superfamily. Thiolase family. As to quaternary structure, heterotetramer of two alpha chains (FadJ) and two beta chains (FadI).

It is found in the cytoplasm. It catalyses the reaction an acyl-CoA + acetyl-CoA = a 3-oxoacyl-CoA + CoA. It functions in the pathway lipid metabolism; fatty acid beta-oxidation. Functionally, catalyzes the final step of fatty acid oxidation in which acetyl-CoA is released and the CoA ester of a fatty acid two carbons shorter is formed. The chain is 3-ketoacyl-CoA thiolase from Escherichia coli O81 (strain ED1a).